Here is a 266-residue protein sequence, read N- to C-terminus: Inositol-1-monophosphatase (266 aa).

Residues Glu-69, Asp-86, Leu-88, and Asp-89 each contribute to the Mg(2+) site. Glu-69 lines the substrate pocket. Substrate-binding positions include 88-91 (LDGT), Arg-185, and Asp-214. Residue Asp-214 coordinates Mg(2+).

Belongs to the inositol monophosphatase superfamily. Mg(2+) serves as cofactor.

The catalysed reaction is a myo-inositol phosphate + H2O = myo-inositol + phosphate. The protein is Inositol-1-monophosphatase (suhB) of Rhizobium meliloti (strain 1021) (Ensifer meliloti).